A 329-amino-acid chain; its full sequence is ATP phosphoribosyltransferase regulatory subunit (329 aa).

It belongs to the class-II aminoacyl-tRNA synthetase family. HisZ subfamily. Heteromultimer composed of HisG and HisZ subunits.

It localises to the cytoplasm. Its pathway is amino-acid biosynthesis; L-histidine biosynthesis; L-histidine from 5-phospho-alpha-D-ribose 1-diphosphate: step 1/9. In terms of biological role, required for the first step of histidine biosynthesis. May allow the feedback regulation of ATP phosphoribosyltransferase activity by histidine. The sequence is that of ATP phosphoribosyltransferase regulatory subunit from Streptococcus gordonii (strain Challis / ATCC 35105 / BCRC 15272 / CH1 / DL1 / V288).